A 151-amino-acid polypeptide reads, in one-letter code: MATMVAGISLRGPVMSSHRTFSVTKRASLPQSKLSSELSFVTSQLSGLKISSTHFISSSAPLSVPFKPSLQPVARRICPFTGKKSNRANKVSHSNHKTKKLQFVNLQYKRIWWEAGKRYVKLRLSTKAIKTIEKNGLDAVAKKAGIDLSKK.

Residues 1-74 (MATMVAGISL…PFKPSLQPVA (74 aa)) constitute a chloroplast transit peptide.

This sequence belongs to the bacterial ribosomal protein bL28 family. In terms of assembly, part of the 50S ribosomal subunit.

It is found in the plastid. Its subcellular location is the chloroplast. The protein is Large ribosomal subunit protein bL28c (RPL28) of Nicotiana tabacum (Common tobacco).